The chain runs to 309 residues: Probable 4-hydroxy-2-oxoglutarate aldolase, mitochondrial (309 aa).

49–50 (SN) is a substrate binding site. Lysine 173 serves as the catalytic Schiff-base intermediate with substrate.

Belongs to the DapA family.

It catalyses the reaction (4S)-4-hydroxy-2-oxoglutarate = glyoxylate + pyruvate. The enzyme catalyses (4R)-4-hydroxy-2-oxoglutarate = glyoxylate + pyruvate. With respect to regulation, inhibited by divalent cations. Its function is as follows. Catalyzes the final step in the metabolic pathway of hydroxyproline. Involved in osmoadaptation. The polypeptide is Probable 4-hydroxy-2-oxoglutarate aldolase, mitochondrial (Emericella nidulans (strain FGSC A4 / ATCC 38163 / CBS 112.46 / NRRL 194 / M139) (Aspergillus nidulans)).